A 106-amino-acid polypeptide reads, in one-letter code: Large ribosomal subunit protein eL42 (106 aa).

The interval 26–53 (YKKGKDSLYAQGKRRYDRKQSGYGGQTK) is disordered.

The protein belongs to the eukaryotic ribosomal protein eL42 family. Component of the large ribosomal subunit.

Its subcellular location is the cytoplasm. Its function is as follows. Component of the large ribosomal subunit. The ribosome is a large ribonucleoprotein complex responsible for the synthesis of proteins in the cell. The protein is Large ribosomal subunit protein eL42 (rpl36a) of Danio rerio (Zebrafish).